The primary structure comprises 210 residues: Thymidylate kinase (210 aa).

Position 11–18 (Gly11–Ser18) interacts with ATP.

The protein belongs to the thymidylate kinase family.

It catalyses the reaction dTMP + ATP = dTDP + ADP. In terms of biological role, phosphorylation of dTMP to form dTDP in both de novo and salvage pathways of dTTP synthesis. The chain is Thymidylate kinase from Mycoplasmoides gallisepticum (strain R(low / passage 15 / clone 2)) (Mycoplasma gallisepticum).